Consider the following 366-residue polypeptide: Bacteriochlorophyll a protein (366 aa).

His-111, His-146, His-290, His-297, and His-298 together coordinate bacteriochlorophyll a.

In terms of assembly, homotrimer. Each subunit contains 7 molecules of bacteriochlorophyll a.

Intermediary in the transfer of excitation energy from the chlorophyll to the reaction centers. This chain is Bacteriochlorophyll a protein (fmoA), found in Chlorobaculum tepidum (strain ATCC 49652 / DSM 12025 / NBRC 103806 / TLS) (Chlorobium tepidum).